The following is a 430-amino-acid chain: Adenylosuccinate synthetase (430 aa).

GTP is bound by residues 12–18 and 40–42; these read GDEGKGK and GHT. The Proton acceptor role is filled by Asp-13. Asp-13 and Gly-40 together coordinate Mg(2+). IMP is bound by residues 13–16, 38–41, Thr-128, Arg-142, Gln-223, Thr-238, and Arg-302; these read DEGK and NAGH. The active-site Proton donor is His-41. 298–304 is a substrate binding site; the sequence is TTTGRPR. GTP is bound by residues Arg-304, 330 to 332, and 412 to 414; these read SID and SVG.

The protein belongs to the adenylosuccinate synthetase family. In terms of assembly, homodimer. Mg(2+) serves as cofactor.

The protein resides in the cytoplasm. The catalysed reaction is IMP + L-aspartate + GTP = N(6)-(1,2-dicarboxyethyl)-AMP + GDP + phosphate + 2 H(+). Its pathway is purine metabolism; AMP biosynthesis via de novo pathway; AMP from IMP: step 1/2. Plays an important role in the de novo pathway of purine nucleotide biosynthesis. Catalyzes the first committed step in the biosynthesis of AMP from IMP. The sequence is that of Adenylosuccinate synthetase from Streptococcus sanguinis (strain SK36).